Here is a 538-residue protein sequence, read N- to C-terminus: Sucrose transport protein SUT1 (538 aa).

Over 1–52 (MARGSGAGGGGGGGGGGLELSVGVGGGGGARGGGGGEAAAAVETAAPISLGR) the chain is Cytoplasmic. The chain crosses the membrane as a helical span at residues 53–73 (LILSGMVAGGVQYGWALQLSL). Over 74-81 (LTPYVQTL) the chain is Extracellular. A helical membrane pass occupies residues 82 to 102 (GLSHALTSFMWLCGPIAGMVV). Over 103 to 123 (QPCVGLYSDRCTSKWGRRRPY) the chain is Cytoplasmic. Residues 124–144 (ILTGCVLICLAVVVIGFSADI) form a helical membrane-spanning segment. The Extracellular portion of the chain corresponds to 145-162 (GYAMGDTKEDCSVYHGSR). A helical transmembrane segment spans residues 163 to 183 (WHAAIVYVLGFWLLDFSNNTV). The Cytoplasmic portion of the chain corresponds to 184–198 (QGPARALMADLSGRH). Residues 199–219 (GPGTANSIFCSWMAMGNILGY) form a helical membrane-spanning segment. Over 220–247 (SSGSTNNWHKWFPFLKTRACCEACANLK) the chain is Extracellular. Residues 248–268 (GAFLVAVIFLSLCLVITLIFA) form a helical membrane-spanning segment. Residues 269-306 (KEVPFKGNAALPTKSNEPAEPEGTGPLAVLKGFRNLPT) lie on the Cytoplasmic side of the membrane. Residues 307–327 (GMPSVLIVTGLTWLSWFPFIL) traverse the membrane as a helical segment. Residues 328 to 357 (YDTDWMGREIYHGDPKGTDPQIEAFNQGVR) are Extracellular-facing. Residues 358–378 (AGAFGLLLNSIVLGFSSFLIE) traverse the membrane as a helical segment. At 379–388 (PMCRKVGPRV) the chain is on the cytoplasmic side. The chain crosses the membrane as a helical span at residues 389–409 (VWVTSNFLVCIAMAATALISF). The Extracellular segment spans residues 410–433 (WSLKDFHGTVQKAITADKSIKAVC). A helical membrane pass occupies residues 434–454 (LVLFAFLGVPLAVLYSVPFAV). At 455-470 (TAQLAATRGGGQGLCT) the chain is on the cytoplasmic side. The helical transmembrane segment at 471–491 (GVLNISIVIPQVVIALGAGPW) threads the bilayer. The Extracellular segment spans residues 492-499 (DELFGKGN). A helical membrane pass occupies residues 500–520 (IPAFGLASGFALIGGVAGIFL). Over 521-538 (LPKISKRQFRSVSMGGGH) the chain is Cytoplasmic.

The protein belongs to the glycoside-pentoside-hexuronide (GPH) cation symporter transporter (TC 2.A.2.4) family. As to quaternary structure, homodimer.

The protein resides in the cell membrane. It participates in glycan biosynthesis; sucrose metabolism. In terms of biological role, responsible for the transport of sucrose into the cell, with the concomitant uptake of protons (symport system). May also transport other glucosides. May be required for apoplastic phloem sucrose loading in source tissues (e.g. leaves) in order to transport it to sink tissues (e.g. roots, flowers). The sequence is that of Sucrose transport protein SUT1 (SUT1) from Oryza sativa subsp. indica (Rice).